The chain runs to 234 residues: Glucosamine-6-phosphate deaminase (234 aa).

The active-site Proton acceptor; for enolization step is the Asp-62. The For ring-opening step role is filled by Asn-128. His-130 serves as the catalytic Proton acceptor; for ring-opening step. Glu-135 serves as the catalytic For ring-opening step.

This sequence belongs to the glucosamine/galactosamine-6-phosphate isomerase family. NagB subfamily.

It catalyses the reaction alpha-D-glucosamine 6-phosphate + H2O = beta-D-fructose 6-phosphate + NH4(+). It functions in the pathway amino-sugar metabolism; N-acetylneuraminate degradation; D-fructose 6-phosphate from N-acetylneuraminate: step 5/5. Catalyzes the reversible isomerization-deamination of glucosamine 6-phosphate (GlcN6P) to form fructose 6-phosphate (Fru6P) and ammonium ion. The chain is Glucosamine-6-phosphate deaminase from Streptococcus equi subsp. equi (strain 4047).